Here is a 90-residue protein sequence, read N- to C-terminus: MVKNSFISVISQEEKDENKGSVEFQIVSFTNKIRRLTSHFELHRKDYLSQRGLRKILGKRQRLLSYLAKKNRVRYKELISRLDIRESKTR.

This sequence belongs to the universal ribosomal protein uS15 family. As to quaternary structure, part of the 30S ribosomal subunit.

The protein resides in the plastid. It localises to the chloroplast. This is Small ribosomal subunit protein uS15c (rps15) from Manihot esculenta (Cassava).